An 82-amino-acid polypeptide reads, in one-letter code: Small ribosomal subunit protein bS16 (82 aa).

Belongs to the bacterial ribosomal protein bS16 family.

The chain is Small ribosomal subunit protein bS16 from Francisella philomiragia subsp. philomiragia (strain ATCC 25017 / CCUG 19701 / FSC 153 / O#319-036).